The primary structure comprises 487 residues: uncharacterized protein (487 aa).

3 helical membrane passes run 10-30 (AALM…AADA), 45-65 (VISP…AVAA), and 439-459 (APVV…DFTL).

It is found in the cell membrane. This is an uncharacterized protein from Mycobacterium tuberculosis (strain CDC 1551 / Oshkosh).